A 2542-amino-acid chain; its full sequence is MKPYHHPEPIAIVGMACRLPGDIESPSKLWDLLAQERSAQSDVPHNRFNVDSWYHPNKQRPGSIHTRGGYFLSQDDSFRQFDASFFGINPKEAASMDPQQRKLLEVVYESFEAAGARLEDVSGSNTACYVGNFTWDIGQMQARDINHGAPYHMTGGGLTILSNRVNYVFNLKGPSMTIDTACSSTMYALHMACRSLQAGDCSAAVVAGTNLIFGIEQQIASVRLGVLSPTSTCHTFDESADGYARAEAIGALYLKPLSQAMADKDPIRAVIRGTSINANGRSSGISHPSSTDQELVIRQAYASAQLGFEQTGYFECHGTGTPVGDPLEVTAIGNVFGDVRTPESPLLMGSVKTNLGHGEAASAISSLIKTVLCLEKGQIPATLGIKRLNPALDLRDGRLKVVQTLSPWPAAQSYLRASVNSFGYGGANAHAILDAVQSYLGDLYQSIPAPMELKTHSPKQCYLLPFSAHDEQTLNRNIRALSQSLQSGVHLPSLAYTLDSRRSNHSERAFALISTKSDGIQLSEKLSPDSLTFGTAMGSRPELAFVFTGQGAQWAQMGQELVEQYEVVRKTLQNLGATIAGLQNAPDWNLLEALAQPQEKSRINEAELSQPLTTAIQIAMVDLLRSWGVTPVAVVGHSSGEIAAAYCAGHITAKEAIVIAYQRGAATVKSTQRGAMLAVGLGPAEALQVIEDIPNIGIACYNSPDSVTLSGSEKAIEEARKRFLIESIFHRKLKTSGNAYHSNLMEEAGQHYERFLQQSLSRELQSTTESEITMFSSVTETPVETVDLAYWRQNLESAVRFDTATQQLLKSRPEVKIIIEIGPHSALAAPIKAIRTVVGYNSEQLVYLPSLKRNTNSVECLLNLVGSLFLSGFPAPISTVNSASNIGQSPQYFIPDLPIYQWKYGQDIMWAESRMSTDIRFRAYPHHDLLGSRIPGTSNSAPAWRNLISIDSVPWLQDHKVGDSVVFPAAGYVALALEAITQTQGSLTGAYTLRDVNINSAMLLKEGSDTELIFDLHVVVSQQGAYKFVASTVSNGTWTEHATGFVRVGEDYTTNETLRINSTIVGGRGGINKDSYVRRWYSAMNKVGLGYGEAFKTLSNIRANAEYSHATAEVPYNASEGQMAQQSRYAVHPTTLDACLQLSIIAAHNGKPEDLIKAYLPVSISKLTVWPSKIRQDVSLEAFGRGFHRGLRSIQASTGLSTPDGQSLLQAELSFLSLETATKEVDAAKMPQPYTRLIWKPDVDRLTNAQAKALFSQTQADESTAKSYFSSLETLTQLAIRSVVERLPHDLQADSLPGHMQKFFKWLLQENAAISNGALDGLTGEKLIEKIYSIAQSLEQRVPEAAMVAQLNTKMPQIVSGTIGALDVMVENDLLTRIYEDGFGQIGAYARLADFMALMAHKNPRLRILELGAGTGGATRVMLNALEGETSLPKYENYAFTDVSKAFLGVAQETFQAHRHLEFGILDIEHDPASQSFEEHSYDIVFASNVIHATRSVASSLRNCKRLLKPNGKLIIVETTKDWQFTGFMLGALPGYWLGADDGRPYSPFLSKAMWNQVLLDAGFAGADIMLDDYDEPASCTTLIVACNTGEDVRLNENGAKGTNGVNGTNGINSTNSVNVTNDTSGINDTNRMNDNNDMKGMNGGNEGHNTIDTERLNGVKPSTVTLIYRYEPQPIQRAIEREYAQMGITTRSMALEAVTTSLERDARTIMLAELESPLLARMTAAEMTAVQRYTQLATTALWVTNGGVMQGQDPEKSLIFGLAKAIMTEQPSFHLCSLDIDIDNMDLENSNSVSLVMDVERAFHQDPHAEMDTELVEKDGLVYISRYVSDFTENTSFERHLAFKPTMSSVPQGNDALALRFEKVGKANSFYFESQGLRPLTGDEVLIDVDATPLDPLSIDALMGKSSSLSFGMILAGTVRAVGFKTRKLEVGDYVCCLYPHHFDTAVIMHERDCEIIVSEERTGNLLGQIYPSIISLHVASSLRLDRGDHVLIDCQQVHLAYTFAQVALLRAIGVDVTFYSDAGLDKLKHLLGDKAKLISREEALKQASSANFFDAVLTDANDGFQLLVNVARPGGRILALGSSPPTDMIHAAPYFLKKGVTMGMFDPMDGFATNLTQQSKVTSNDGNHDASPELTQSRSLLAEALGLLHHGSIRPLPCERFDLARLPEAISKVAQGDSVGSVVLTRTPDTRVPVHAAEDLLMFNPEASYLLVGCLGGLGRSLTAWMVSRGARHFIFLSRSGADKPEAAALVDELHELARSKYPDLSVQVIRGDVSARDDVKRAISCATKPIKGVVQAAMVLKDKLFSEMSLDDFNKVVHPKMLGSLHLHELLLNHDLDFFVMTSSVLGAIGAAMQSNYSAANAYLDHMARHRRSMGLQAMSMALGMIVDVGHVEEHPEVEKALKRNGLYGISVDEYLINMELACRRQDLSNPIPPQSPYRYDAGAAAHIVTGMDPTRLSRAGGKSLWLKDNRLRNIVVGLGDASGEDERNAENATGVNTAKLLESARAEGGTTAVKSVVLGLVLARFSKLVLLPVEKIDP.

Positions 7-435 (PEPIAIVGMA…GANAHAILDA (429 aa)) constitute a Ketosynthase family 3 (KS3) domain. Active-site for beta-ketoacyl synthase activity residues include cysteine 182, histidine 317, and histidine 357. One can recognise a Malonyl-CoA:ACP transacylase (MAT) domain in the interval 545 to 872 (FVFTGQGAQW…NLVGSLFLSG (328 aa)). The tract at residues 927–1062 (HDLLGSRIPG…TTNETLRINS (136 aa)) is N-terminal hotdog fold. The region spanning 927-1224 (HDLLGSRIPG…FLSLETATKE (298 aa)) is the PKS/mFAS DH domain. Histidine 959 (proton acceptor; for dehydratase activity) is an active-site residue. Residues 1072–1224 (NKDSYVRRWY…FLSLETATKE (153 aa)) form a C-terminal hotdog fold region. Residue aspartate 1137 is the Proton donor; for dehydratase activity of the active site. A methyltransferase (CMet) domain region spans residues 1275–1574 (LTQLAIRSVV…AGADIMLDDY (300 aa)). The tract at residues 1606 to 1634 (VNGTNGINSTNSVNVTNDTSGINDTNRMN) is disordered. Positions 1866–2186 (GKANSFYFES…QGDSVGSVVL (321 aa)) constitute an Enoyl reductase (ER) domain. The Ketoreductase (KR) domain occupies 2209–2389 (ASYLLVGCLG…QAMSMALGMI (181 aa)).

Pantetheine 4'-phosphate serves as cofactor.

The protein operates within antifungal biosynthesis. Functionally, highly reducing polyketide synthase; part of the gene cluster that mediates the biosynthesis of the tetrahydropyranyl antifungal agent lanomycin that acts as an inhibitor of CYP51 and blocks the ergosterol biosynthesis. The biosynthesis probably begins with the formation of an hexaketide, followed by methionine mediated alkylation of C-2 and C-6, and methylation of the reduced C-3 oxygen, pyran forming reductive ring closure, oxygenation of C-4, beta-keto reduction, enoyl reduction and dehydration of the remaining oxygens, and finally, acylation with glycine to complete the biosynthesis. The polypeptide is Highly reducing polyketide synthase (Pyrenophora dematioidea (Helminthosporium dematioideum)).